A 396-amino-acid chain; its full sequence is Flavohemoprotein (396 aa).

Residues Met-1–Asp-136 form the Globin domain. His-85 is a heme b binding site. Catalysis depends on charge relay system residues Tyr-95 and Glu-135. The interval Gly-147 to Val-396 is reductase. The region spanning Ser-150–Asp-255 is the FAD-binding FR-type domain. FAD is bound by residues Tyr-188 and Arg-204–Ser-207. Gly-268–Pro-273 is an NADP(+) binding site. Cys-389–Pro-392 is a binding site for FAD.

It belongs to the globin family. Two-domain flavohemoproteins subfamily. In the C-terminal section; belongs to the flavoprotein pyridine nucleotide cytochrome reductase family. Heme b is required as a cofactor. The cofactor is FAD.

It catalyses the reaction 2 nitric oxide + NADPH + 2 O2 = 2 nitrate + NADP(+) + H(+). The catalysed reaction is 2 nitric oxide + NADH + 2 O2 = 2 nitrate + NAD(+) + H(+). Functionally, is involved in NO detoxification in an aerobic process, termed nitric oxide dioxygenase (NOD) reaction that utilizes O(2) and NAD(P)H to convert NO to nitrate, which protects the bacterium from various noxious nitrogen compounds. Therefore, plays a central role in the inducible response to nitrosative stress. This Pectobacterium atrosepticum (strain SCRI 1043 / ATCC BAA-672) (Erwinia carotovora subsp. atroseptica) protein is Flavohemoprotein.